The primary structure comprises 185 residues: Large ribosomal subunit protein bL25 (185 aa).

The protein belongs to the bacterial ribosomal protein bL25 family. CTC subfamily. Part of the 50S ribosomal subunit; part of the 5S rRNA/L5/L18/L25 subcomplex. Contacts the 5S rRNA. Binds to the 5S rRNA independently of L5 and L18.

Its function is as follows. This is one of the proteins that binds to the 5S RNA in the ribosome where it forms part of the central protuberance. The polypeptide is Large ribosomal subunit protein bL25 (Chlamydia muridarum (strain MoPn / Nigg)).